The following is a 395-amino-acid chain: Imidazolonepropionase (395 aa).

Residues His-63 and His-65 each contribute to the Fe(3+) site. The Zn(2+) site is built by His-63 and His-65. The 4-imidazolone-5-propanoate site is built by Arg-72, Tyr-135, and His-168. Tyr-135 serves as a coordination point for N-formimidoyl-L-glutamate. His-233 is a Fe(3+) binding site. His-233 is a binding site for Zn(2+). Gln-236 is a binding site for 4-imidazolone-5-propanoate. Residue Asp-308 participates in Fe(3+) binding. Zn(2+) is bound at residue Asp-308. N-formimidoyl-L-glutamate is bound by residues Asn-310 and Gly-312. Thr-313 contributes to the 4-imidazolone-5-propanoate binding site.

Belongs to the metallo-dependent hydrolases superfamily. HutI family. Requires Zn(2+) as cofactor. The cofactor is Fe(3+).

Its subcellular location is the cytoplasm. It catalyses the reaction 4-imidazolone-5-propanoate + H2O = N-formimidoyl-L-glutamate. Its pathway is amino-acid degradation; L-histidine degradation into L-glutamate; N-formimidoyl-L-glutamate from L-histidine: step 3/3. Catalyzes the hydrolytic cleavage of the carbon-nitrogen bond in imidazolone-5-propanoate to yield N-formimidoyl-L-glutamate. It is the third step in the universal histidine degradation pathway. The protein is Imidazolonepropionase of Cereibacter sphaeroides (strain ATCC 17023 / DSM 158 / JCM 6121 / CCUG 31486 / LMG 2827 / NBRC 12203 / NCIMB 8253 / ATH 2.4.1.) (Rhodobacter sphaeroides).